Consider the following 96-residue polypeptide: MPAIEVGRICVKVKGREAGSKCVIVDIIDDNFVLVTGPKDITGVKRRRVNILHLEPTDKKIDIQKGASDEEVKKKLEESNLTEYMKEKIKIRMPTL.

The protein belongs to the eukaryotic ribosomal protein eL14 family.

The polypeptide is Large ribosomal subunit protein eL14 (Saccharolobus solfataricus (strain ATCC 35092 / DSM 1617 / JCM 11322 / P2) (Sulfolobus solfataricus)).